The primary structure comprises 428 residues: Sulfhydrogenase 1 subunit alpha (428 aa).

Cys-65, Cys-68, Cys-418, and Cys-421 together coordinate Ni(2+). Cys-68 is a Fe cation binding site. Cys-421 contributes to the Fe cation binding site.

Belongs to the [NiFe]/[NiFeSe] hydrogenase large subunit family. As to quaternary structure, heterotetramer of alpha, beta, gamma and delta subunits. The nickel-containing alpha and delta subunits constitute the hydrogenase activity. The beta and gamma subunits (flavin-containing dimer) constitute the sulfur reductase activity. Ni(2+) serves as cofactor. Requires Fe cation as cofactor.

It localises to the cytoplasm. The enzyme catalyses H2 + NADP(+) = NADPH + H(+). Part of a bifunctional enzyme complex that functions as an NADPH-dependent hydrogen-evolving hydrogenase with sulfur-reducing activity. May play a role in hydrogen cycling during fermentative growth. Activity not exhibited with NAD. The alpha and delta subunits form the hydrogenase component that catalyzes the reduction of protons to evolve hydrogen. The chain is Sulfhydrogenase 1 subunit alpha from Pyrococcus furiosus (strain ATCC 43587 / DSM 3638 / JCM 8422 / Vc1).